The chain runs to 319 residues: Taste receptor type 2 member 30 (319 aa).

Met-1 is a topological domain (extracellular). A helical transmembrane segment spans residues 2–22 (ITFLPIIFSILIVVIFVIGNF). Residues 23-46 (ANGFIALVNSIEWVKRQKISFVDQ) are Cytoplasmic-facing. A helical transmembrane segment spans residues 47-67 (ILTALAVSRVGLLWVLLLHWY). Topologically, residues 68–86 (ATQLNPAFYSVEVRITAYN) are extracellular. The helical transmembrane segment at 87–107 (VWAVTNHFSSWLATSLSMFYL) threads the bilayer. Topologically, residues 108–126 (LRIANFSNLIFLRIKRRVK) are cytoplasmic. Residues 127 to 147 (SVVLVILLGPLLFLVCHLFVI) form a helical membrane-spanning segment. Over 148 to 178 (NMDETVWTKEYEGNVTWKIKLRSAMYHSNMT) the chain is Extracellular. N-linked (GlcNAc...) asparagine glycans are attached at residues Asn-161 and Asn-176. A helical transmembrane segment spans residues 179 to 199 (LTMLANFVPLTLTLISFLLLI). Residues 200 to 229 (CSLCKHLKKMQLHGKGSQDPSTKVHIKALQ) lie on the Cytoplasmic side of the membrane. The helical transmembrane segment at 230-250 (TVTSFLLLCAIYFLSMIISVC) threads the bilayer. Topologically, residues 251–259 (NFGRLEKQP) are extracellular. A helical transmembrane segment spans residues 260 to 280 (VFMFCQAIIFSYPSTHPFILI). Topologically, residues 281-319 (LGNKKLKQIFLSVLRHVRYWVKDRSLRLHRFTRGALCVF) are cytoplasmic.

Belongs to the G-protein coupled receptor T2R family. In terms of tissue distribution, expressed in subsets of taste receptor cells of the tongue and exclusively in gustducin-positive cells.

The protein localises to the membrane. Its function is as follows. Receptor that may play a role in the perception of bitterness and is gustducin-linked. May play a role in sensing the chemical composition of the gastrointestinal content. The activity of this receptor may stimulate alpha gustducin, mediate PLC-beta-2 activation and lead to the gating of TRPM5. The chain is Taste receptor type 2 member 30 (TAS2R30) from Homo sapiens (Human).